We begin with the raw amino-acid sequence, 431 residues long: Adenylosuccinate synthetase (431 aa).

GTP-binding positions include 13-19 (GDEGKGK) and 41-43 (GHT). Aspartate 14 acts as the Proton acceptor in catalysis. 2 residues coordinate Mg(2+): aspartate 14 and glycine 41. IMP contacts are provided by residues 14–17 (DEGK), 39–42 (NAGH), threonine 130, arginine 144, glutamine 225, threonine 240, and arginine 304. The Proton donor role is filled by histidine 42. 300 to 306 (ATTGRKR) is a substrate binding site. GTP is bound by residues arginine 306, 332-334 (KLD), and 415-417 (STG).

Belongs to the adenylosuccinate synthetase family. Homodimer. Requires Mg(2+) as cofactor.

It is found in the cytoplasm. It carries out the reaction IMP + L-aspartate + GTP = N(6)-(1,2-dicarboxyethyl)-AMP + GDP + phosphate + 2 H(+). It participates in purine metabolism; AMP biosynthesis via de novo pathway; AMP from IMP: step 1/2. Plays an important role in the de novo pathway of purine nucleotide biosynthesis. Catalyzes the first committed step in the biosynthesis of AMP from IMP. This chain is Adenylosuccinate synthetase, found in Shewanella woodyi (strain ATCC 51908 / MS32).